The primary structure comprises 100 residues: uncharacterized protein (100 aa).

It localises to the mitochondrion. This is an uncharacterized protein from Arabidopsis thaliana (Mouse-ear cress).